The chain runs to 151 residues: Guanylate kinase homolog (151 aa).

The 141-residue stretch at 1–141 (MEREGVDYHY…AYSKLIQILQ (141 aa)) folds into the Guanylate kinase-like domain.

Belongs to the guanylate kinase family.

In Bos taurus (Bovine), this protein is Guanylate kinase homolog.